The chain runs to 245 residues: tRNA (guanine-N(7)-)-methyltransferase (245 aa).

S-adenosyl-L-methionine contacts are provided by Glu75, Glu100, Asp127, and Asp149. Asp149 is a catalytic residue. Substrate contacts are provided by residues Lys153, Asp185, and 222–225; that span reads TKFE.

The protein belongs to the class I-like SAM-binding methyltransferase superfamily. TrmB family.

It catalyses the reaction guanosine(46) in tRNA + S-adenosyl-L-methionine = N(7)-methylguanosine(46) in tRNA + S-adenosyl-L-homocysteine. Its pathway is tRNA modification; N(7)-methylguanine-tRNA biosynthesis. Its function is as follows. Catalyzes the formation of N(7)-methylguanine at position 46 (m7G46) in tRNA. The polypeptide is tRNA (guanine-N(7)-)-methyltransferase (Acinetobacter baylyi (strain ATCC 33305 / BD413 / ADP1)).